The following is a 314-amino-acid chain: Protein SPOROCYTELESS (314 aa).

Residues 1–17 (MATSLFFMSTDQNSVGN) are compositionally biased toward polar residues. Disordered regions lie at residues 1 to 20 (MATS…NPND) and 33 to 62 (GEIR…PTLR). An SPL motif is present at residues 62–70 (RGMGVAKLE). The EAR signature appears at 308–314 (IDLSLKL).

Belongs to the NOZZLE family. In terms of assembly, homodimer and heterodimer with SPEARs. Interacts in vitro with YAB1, YAB3 and YAB4. Interacts (via EAR motif) with TPL, TPR1, TPR2, TPR3 and TPR4. Interacts with SPEAR1, SPEAR2, SPEAR3, SPEAR4, TCP1, TCP6, TCP8, TCP9, TCP11, TCP15, TCP20, TCP21 and TCP23. Interacts with TCP2, TCP3, TCP4, TCP5, TCP10, TCP13, TCP17 and TCP24. Expressed in flower buds. Not found in leaves, siliques and stems. Detected in rosette leaves, stem tissue and seedlings.

It localises to the nucleus. Transcriptional regulator of sporocyte development. Acts as an adapter-like transcriptional repressor recruiting TPL/TPR corepressors to inhibit TCP transcription factors. Required for nucellus and embryo sac development. Plays a central role in patterning both the proximal-distal and the adaxial-abaxial axes during ovule development. Involved in establishing the prospective chalaza of the ovule and in controlling the cell number and the length of the funiculus, and is required for the development of the integuments. Required, with BEL1, for cytokinin-induced PIN1 expression in ovules. Involved in controlling stamen identity. May also regulate the morphology of lateral organs by repressing auxin production. The sequence is that of Protein SPOROCYTELESS from Arabidopsis thaliana (Mouse-ear cress).